A 274-amino-acid polypeptide reads, in one-letter code: Small nuclear ribonucleoprotein-associated protein B (274 aa).

In terms of domain architecture, Sm spans 5–85 (PKSSKMLQYI…VVSMSVEAPP (81 aa)). Residues 148–274 (PGGGVPPPMG…PMGRGGFQRK (127 aa)) are disordered. The stretch at 162 to 171 (PPQGFPPGGP) is repeat 1. Residues 162-265 (PPQGFPPGGP…PPQGFPPGGP (104 aa)) are 6 X 10 AA repeats of P-P-Q-G-F-P-P-G-G-P. The span at 173–187 (PQGAFNNNPNNNNGG) shows a compositional bias: low complexity. Repeat copies occupy residues 188–197 (PPQGFPPGGP), 204–213 (PPQGFPPGGP), 225–234 (PPQGFPPGGP), 241–250 (PPQGFPPGGP), and 256–265 (PPQGFPPGGP). Low complexity predominate over residues 216–226 (GPNLNNGNMPP). Gly residues predominate over residues 265 to 274 (PMGRGGFQRK).

It belongs to the snRNP SmB/SmN family.

The protein localises to the cytoplasm. The protein resides in the cytosol. It localises to the nucleus. Plays a role in pre-mRNA splicing as a core component of the spliceosomal U1, U2, U4 and U5 small nuclear ribonucleoproteins (snRNPs), the building blocks of the spliceosome. The polypeptide is Small nuclear ribonucleoprotein-associated protein B (snrpb) (Dictyostelium discoideum (Social amoeba)).